The following is a 180-amino-acid chain: ATP synthase subunit delta (180 aa).

The protein belongs to the ATPase delta chain family. As to quaternary structure, F-type ATPases have 2 components, F(1) - the catalytic core - and F(0) - the membrane proton channel. F(1) has five subunits: alpha(3), beta(3), gamma(1), delta(1), epsilon(1). CF(0) has four main subunits: a(1), b(1), b'(1) and c(10-14). The alpha and beta chains form an alternating ring which encloses part of the gamma chain. F(1) is attached to F(0) by a central stalk formed by the gamma and epsilon chains, while a peripheral stalk is formed by the delta, b and b' chains.

It is found in the cellular thylakoid membrane. Its function is as follows. F(1)F(0) ATP synthase produces ATP from ADP in the presence of a proton or sodium gradient. F-type ATPases consist of two structural domains, F(1) containing the extramembraneous catalytic core and F(0) containing the membrane proton channel, linked together by a central stalk and a peripheral stalk. During catalysis, ATP synthesis in the catalytic domain of F(1) is coupled via a rotary mechanism of the central stalk subunits to proton translocation. In terms of biological role, this protein is part of the stalk that links CF(0) to CF(1). It either transmits conformational changes from CF(0) to CF(1) or is implicated in proton conduction. This chain is ATP synthase subunit delta, found in Prochlorococcus marinus (strain AS9601).